The primary structure comprises 567 residues: uncharacterized protein (567 aa).

12 helical membrane passes run 136–156 (LFCLGCLWCYFSSGMVSLIFA), 159–179 (FMGIGGGGLITLSTIINSDII), 193–213 (LLLGFGAICGASFGGVLSEVF), 217–237 (LCFLVQVPFSVLSIAVGFFFV), 258–278 (ILGGLLLVSGLTSLLLVLTFG), 291–311 (LLLLLGILCIVAFVYVESITE), 334–354 (FLIGLAGYAYLFTLPLFFQLV), 364–384 (LRLALPSLSTPIGGLICGILM), 393–415 (LLFSGVFLMSLGYFLSLFIHPGI), 426–446 (PANVGQGIGFPSSLFSFIFAF), 457–477 (TLYLIRSIGSLFGVGGLSAVI), and 536–553 (AQQFTTICCVLALGLCIL).

The protein belongs to the major facilitator superfamily.

It is found in the membrane. This is an uncharacterized protein from Schizosaccharomyces pombe (strain 972 / ATCC 24843) (Fission yeast).